A 216-amino-acid polypeptide reads, in one-letter code: Protein-L-isoaspartate O-methyltransferase (216 aa).

Residue serine 61 is part of the active site.

It belongs to the methyltransferase superfamily. L-isoaspartyl/D-aspartyl protein methyltransferase family.

It localises to the cytoplasm. It catalyses the reaction [protein]-L-isoaspartate + S-adenosyl-L-methionine = [protein]-L-isoaspartate alpha-methyl ester + S-adenosyl-L-homocysteine. Its function is as follows. Catalyzes the methyl esterification of L-isoaspartyl residues in peptides and proteins that result from spontaneous decomposition of normal L-aspartyl and L-asparaginyl residues. It plays a role in the repair and/or degradation of damaged proteins. The protein is Protein-L-isoaspartate O-methyltransferase (pcm) of Pyrococcus abyssi (strain GE5 / Orsay).